Here is a 235-residue protein sequence, read N- to C-terminus: Aspartate/glutamate leucyltransferase (235 aa).

Belongs to the R-transferase family. Bpt subfamily.

The protein localises to the cytoplasm. It carries out the reaction N-terminal L-glutamyl-[protein] + L-leucyl-tRNA(Leu) = N-terminal L-leucyl-L-glutamyl-[protein] + tRNA(Leu) + H(+). The enzyme catalyses N-terminal L-aspartyl-[protein] + L-leucyl-tRNA(Leu) = N-terminal L-leucyl-L-aspartyl-[protein] + tRNA(Leu) + H(+). Functionally, functions in the N-end rule pathway of protein degradation where it conjugates Leu from its aminoacyl-tRNA to the N-termini of proteins containing an N-terminal aspartate or glutamate. The protein is Aspartate/glutamate leucyltransferase of Pseudomonas entomophila (strain L48).